The following is a 210-amino-acid chain: N-(5'-phosphoribosyl)anthranilate isomerase (210 aa).

This sequence belongs to the TrpF family.

It catalyses the reaction N-(5-phospho-beta-D-ribosyl)anthranilate = 1-(2-carboxyphenylamino)-1-deoxy-D-ribulose 5-phosphate. Its pathway is amino-acid biosynthesis; L-tryptophan biosynthesis; L-tryptophan from chorismate: step 3/5. This is N-(5'-phosphoribosyl)anthranilate isomerase from Staphylococcus aureus (strain MRSA252).